A 294-amino-acid polypeptide reads, in one-letter code: 33 kDa chaperonin (294 aa).

Cystine bridges form between cysteine 238-cysteine 240 and cysteine 271-cysteine 274.

Belongs to the HSP33 family. Under oxidizing conditions two disulfide bonds are formed involving the reactive cysteines. Under reducing conditions zinc is bound to the reactive cysteines and the protein is inactive.

It is found in the cytoplasm. In terms of biological role, redox regulated molecular chaperone. Protects both thermally unfolding and oxidatively damaged proteins from irreversible aggregation. Plays an important role in the bacterial defense system toward oxidative stress. In Caldanaerobacter subterraneus subsp. tengcongensis (strain DSM 15242 / JCM 11007 / NBRC 100824 / MB4) (Thermoanaerobacter tengcongensis), this protein is 33 kDa chaperonin.